Here is a 736-residue protein sequence, read N- to C-terminus: Subtilisin-like protease SBT4.6 (736 aa).

The first 24 residues, 1–24 (MATAVSYCLLSCIFALLVVSFASA), serve as a signal peptide directing secretion. Residues 25–111 (GKDDQDKQVY…VFPSKNLNLQ (87 aa)) constitute a propeptide, activation peptide. The Inhibitor I9 domain occupies 33 to 110 (VYIVYMGALP…SVFPSKNLNL (78 aa)). The region spanning 115–589 (SWNFMGLKEG…AGHVDPIAAI (475 aa)) is the Peptidase S8 domain. The active-site Charge relay system is the Asp-143. Asn-174 is a glycosylation site (N-linked (GlcNAc...) asparagine). His-204 serves as the catalytic Charge relay system. Asn-227 is a glycosylation site (N-linked (GlcNAc...) asparagine). The 81-residue stretch at 362–442 (KYPLVYGKSA…PVSVLSEDDY (81 aa)) folds into the PA domain. Asn-450 carries N-linked (GlcNAc...) asparagine glycosylation. Ser-527 functions as the Charge relay system in the catalytic mechanism. N-linked (GlcNAc...) asparagine glycans are attached at residues Asn-564, Asn-598, Asn-610, and Asn-668.

The protein belongs to the peptidase S8 family. Post-translationally, the C-terminal propeptide is autocleaved.

The protein localises to the secreted. This Arabidopsis thaliana (Mouse-ear cress) protein is Subtilisin-like protease SBT4.6.